The sequence spans 443 residues: D-aminoacyl-tRNA deacylase (443 aa).

This sequence belongs to the DtdA deacylase family. As to quaternary structure, monomer. Zn(2+) serves as cofactor.

It catalyses the reaction a D-aminoacyl-tRNA + H2O = a tRNA + a D-alpha-amino acid + H(+). The enzyme catalyses glycyl-tRNA(Ala) + H2O = tRNA(Ala) + glycine + H(+). D-aminoacyl-tRNA deacylase with broad substrate specificity. By recycling D-aminoacyl-tRNA to D-amino acids and free tRNA molecules, this enzyme counteracts the toxicity associated with the formation of D-aminoacyl-tRNA entities in vivo. This is D-aminoacyl-tRNA deacylase from Methanocorpusculum labreanum (strain ATCC 43576 / DSM 4855 / Z).